A 207-amino-acid polypeptide reads, in one-letter code: Ribonuclease HII (207 aa).

An RNase H type-2 domain is found at 18–207 (TYLSGSDEAG…PIKKISKETS (190 aa)). 3 residues coordinate a divalent metal cation: aspartate 24, glutamate 25, and aspartate 116.

This sequence belongs to the RNase HII family. The cofactor is Mn(2+). Requires Mg(2+) as cofactor.

The protein resides in the cytoplasm. The catalysed reaction is Endonucleolytic cleavage to 5'-phosphomonoester.. Its function is as follows. Endonuclease that specifically degrades the RNA of RNA-DNA hybrids. This Mycoplasma mycoides subsp. mycoides SC (strain CCUG 32753 / NCTC 10114 / PG1) protein is Ribonuclease HII.